The chain runs to 90 residues: Small ribosomal subunit protein bS16 (90 aa).

Belongs to the bacterial ribosomal protein bS16 family. Part of the 30S ribosomal subunit.

This chain is Small ribosomal subunit protein bS16, found in Bacillus subtilis (strain 168).